A 2664-amino-acid polypeptide reads, in one-letter code: Non-reducing polyketide synthase sorB (2664 aa).

The tract at residues 21 to 45 (KSAPQSGNTADDIPNAASQPDTTST) is disordered. A compositionally biased stretch (polar residues) spans 36–45 (AASQPDTTST). Positions 112–281 (ADHARRLAEW…TTPSRIASDL (170 aa)) are N-terminal acylcarrier protein transacylase domain (SAT). The active-site Nucleophile; for transacylase activity is cysteine 184. Residue histidine 302 is the Proton donor/acceptor; for transacylase activity of the active site. The Ketosynthase family 3 (KS3) domain occupies 428-849 (DNDIAVIGMS…GSNASMVIKQ (422 aa)). Active-site for beta-ketoacyl synthase activity residues include cysteine 596, histidine 731, and histidine 772. The tract at residues 961-1276 (CFGGQVSKSV…TQGTRQLADV (316 aa)) is malonyl-CoA:ACP transacylase (MAT) domain. Residues 1345 to 1477 (PGLYTFMGYG…GQLEFHRADD (133 aa)) form an N-terminal hotdog fold region. The 319-residue stretch at 1345–1663 (PGLYTFMGYG…FSARSMSELF (319 aa)) folds into the PKS/mFAS DH domain. Residues 1376–1548 (VSGYTLGKTV…PSESAGRAVK (173 aa)) form a product template (PT) domain region. Residues 1507–1663 (DEVIQGQSIY…FSARSMSELF (157 aa)) are C-terminal hotdog fold. In terms of domain architecture, Carrier spans 1711–1785 (TELWAKLLPV…GILAFLQSTL (75 aa)). Residue serine 1745 is modified to O-(pantetheine 4'-phosphoryl)serine. Residues 1789–1820 (GEDDASQSSDAASSSRNTPPSSNDGILATPSP) are disordered. Residues 1794–1803 (SQSSDAASSS) are compositionally biased toward low complexity. Residues 2015 to 2197 (FQLMADFLSR…DAGYKHVEWT (183 aa)) are methyltransferase domain. An NADPH-binding (R) domain region spans residues 2281-2526 (VTGTTGSLGS…TLRSFPAVEG (246 aa)).

Pantetheine 4'-phosphate serves as cofactor.

Its pathway is secondary metabolite biosynthesis. In terms of biological role, non-reducing polyketide synthase; part of the gene cluster that mediates the biosynthesis of sorbicillinoids, a diverse group of yellow secondary metabolites that restrict growth of competing pathogenic fungi but not of bacteria. Sorbicillinoids biosynthesis requires the action of two PKSs. SorA iteratively combines three acetyl units and the growing chain is modified by the ketoacyl reductase subunit, and optional by the enoyl reductase subunit in the second cycle. The polyketide is then handed over to the PKS SorB, which adds three more acetyl units, and two methyl groups. SorB releases an aldehyde, which undergoes spontaneous cyclization resulting in the formation of sorbicillin or 2',3'-dihydrosorbicillin. The monooxygenase sorC oxidizes sorbicillin and 2',3'-dihydrosorbicillin to 2',3'-dihydrosorbicillinol and sorbicillinol, respectively. The oxidoreductase sorD further converts sorbicillinol into oxosorbicillinol. Sorbicillinol is the building block for the other sorbicillinoids such as disorbicillinol, bisvertinolon, and dihydrobisvertinolone. In Penicillium rubens (strain ATCC 28089 / DSM 1075 / NRRL 1951 / Wisconsin 54-1255) (Penicillium chrysogenum), this protein is Non-reducing polyketide synthase sorB.